Reading from the N-terminus, the 72-residue chain is uncharacterized protein (72 aa).

It belongs to the baculoviridae 8 kDa protein family.

This is an uncharacterized protein from Orgyia pseudotsugata (Douglas-fir tussock moth).